Consider the following 449-residue polypeptide: UDP-N-acetylmuramoylalanine--D-glutamate ligase (449 aa).

An ATP-binding site is contributed by 113-119 (GTNGKTT).

It belongs to the MurCDEF family.

The protein resides in the cytoplasm. The catalysed reaction is UDP-N-acetyl-alpha-D-muramoyl-L-alanine + D-glutamate + ATP = UDP-N-acetyl-alpha-D-muramoyl-L-alanyl-D-glutamate + ADP + phosphate + H(+). Its pathway is cell wall biogenesis; peptidoglycan biosynthesis. Cell wall formation. Catalyzes the addition of glutamate to the nucleotide precursor UDP-N-acetylmuramoyl-L-alanine (UMA). The polypeptide is UDP-N-acetylmuramoylalanine--D-glutamate ligase (Microcystis aeruginosa (strain NIES-843 / IAM M-2473)).